Here is a 465-residue protein sequence, read N- to C-terminus: Lactaldehyde dehydrogenase (465 aa).

Gly220–Gly225 lines the NAD(+) pocket. Catalysis depends on residues Glu240 and Cys274.

This sequence belongs to the aldehyde dehydrogenase family. In terms of assembly, homotetramer.

The enzyme catalyses (S)-lactaldehyde + NAD(+) + H2O = (S)-lactate + NADH + 2 H(+). Its pathway is cofactor biosynthesis; coenzyme F420 biosynthesis. Involved in F420 biosynthesis through the oxidation of lactaldehyde to lactate. The chain is Lactaldehyde dehydrogenase from Methanococcus aeolicus (strain ATCC BAA-1280 / DSM 17508 / OCM 812 / Nankai-3).